The following is a 397-amino-acid chain: Ribosomal RNA large subunit methyltransferase I (397 aa).

Positions 2 to 79 (TAAIYLVKGR…KEEINKAFFV (78 aa)) constitute a PUA domain.

Belongs to the methyltransferase superfamily. RlmI family.

It is found in the cytoplasm. It catalyses the reaction cytidine(1962) in 23S rRNA + S-adenosyl-L-methionine = 5-methylcytidine(1962) in 23S rRNA + S-adenosyl-L-homocysteine + H(+). Specifically methylates the cytosine at position 1962 (m5C1962) of 23S rRNA. This Vibrio parahaemolyticus serotype O3:K6 (strain RIMD 2210633) protein is Ribosomal RNA large subunit methyltransferase I.